Reading from the N-terminus, the 237-residue chain is LexA repressor (237 aa).

A DNA-binding region (H-T-H motif) is located at residues 26 to 46 (FDEMKDALGLKSKSGIHRLIT). Active-site for autocatalytic cleavage activity residues include Ser158 and Lys196.

Belongs to the peptidase S24 family. Homodimer.

The enzyme catalyses Hydrolysis of Ala-|-Gly bond in repressor LexA.. Its function is as follows. Represses a number of genes involved in the response to DNA damage (SOS response), including recA and lexA. In the presence of single-stranded DNA, RecA interacts with LexA causing an autocatalytic cleavage which disrupts the DNA-binding part of LexA, leading to derepression of the SOS regulon and eventually DNA repair. In Rhodospirillum centenum (strain ATCC 51521 / SW), this protein is LexA repressor.